The primary structure comprises 298 residues: uncharacterized protein (298 aa).

The ABC transporter domain maps to 2 to 229 (LTIDHVTKTF…FGKKNVTIHS (228 aa)). 34-41 (GANGAGKT) provides a ligand contact to ATP.

This sequence belongs to the ABC transporter superfamily.

Its subcellular location is the cell membrane. This is an uncharacterized protein from Bacillus subtilis (strain 168).